A 43-amino-acid polypeptide reads, in one-letter code: Omega-agatoxin-Aa3c (43 aa).

3 cysteine pairs are disulfide-bonded: C2–C19, C9–C25, and C27–C38.

It belongs to the neurotoxin 04 (omega-agtx) family. 03 (type II/III omega-agtx) subfamily. Expressed by the venom gland.

The protein resides in the secreted. In terms of biological role, omega-agatoxins are antagonists of voltage-gated calcium channels (Cav). This is Omega-agatoxin-Aa3c from Agelenopsis aperta (North American funnel-web spider).